The following is a 329-amino-acid chain: Vomeronasal type-1 receptor 43 (329 aa).

At 1-32 the chain is on the extracellular side; that stretch reads MSKILFFSPCSLFSHTMNKNSRLHTNSNIGNT. The chain crosses the membrane as a helical span at residues 33-53; that stretch reads FFSEIGIGITGNSFLLLYHIL. The Cytoplasmic portion of the chain corresponds to 54–65; sequence KFIRGHRPRLTD. A helical transmembrane segment spans residues 66–86; it reads LPIGLLSLIHLLMLLVAAFIA. Over 87 to 109 the chain is Extracellular; that stretch reads TDIFISRRGWDDIICKFLVYLYR. A disulfide bridge connects residues Cys101 and Cys188. Residues 110-130 traverse the membrane as a helical segment; the sequence is VLRGLSLCTTSMLSVLQAIIL. The Cytoplasmic segment spans residues 131–147; that stretch reads SPRSSCLSKFKHISLHH. Residues 148–168 traverse the membrane as a helical segment; it reads ILCAILFLSVLYMLISSQLLV. Topologically, residues 169 to 209 are extracellular; it reads SIIATPNLTTNDLTYVTQSCSILPLSYLVESINSTLLAIRE. N-linked (GlcNAc...) asparagine glycosylation is found at Asn175 and Asn201. A helical membrane pass occupies residues 210–230; it reads YFLISLMFLSTWYIVALLCMH. The Cytoplasmic segment spans residues 231 to 255; it reads RKQTQHLQETRLSLKKSPEQSATQT. The chain crosses the membrane as a helical span at residues 256–276; that stretch reads ILMLMTFFVLMTIYDNIVSCL. Residues 277-285 lie on the Extracellular side of the membrane; the sequence is RTMLLNDPT. The helical transmembrane segment at 286–306 threads the bilayer; the sequence is SYSIELFMIHIYATVSPFVFM. Residues 307-329 lie on the Cytoplasmic side of the membrane; the sequence is SNEKHIVNFLRSMGKRMINLNLH.

The protein belongs to the G-protein coupled receptor 1 family.

The protein localises to the cell membrane. In terms of biological role, putative pheromone receptor implicated in the regulation of social and reproductive behavior. The sequence is that of Vomeronasal type-1 receptor 43 (Vmn1r43) from Mus musculus (Mouse).